The chain runs to 211 residues: Small ribosomal subunit protein uS3 (211 aa).

The 70-residue stretch at 16–85 folds into the KH type-2 domain; it reads IDEYFKTKLV…NPQIEVKQVE (70 aa).

Belongs to the universal ribosomal protein uS3 family. As to quaternary structure, part of the 30S ribosomal subunit.

Its function is as follows. Binds the lower part of the 30S subunit head. The chain is Small ribosomal subunit protein uS3 from Methanococcus maripaludis (strain C5 / ATCC BAA-1333).